The sequence spans 338 residues: Eukaryotic translation initiation factor 3 subunit H (338 aa).

The MPN domain occupies 22–154 (VQCDGLAVMK…LKAYRLTPQA (133 aa)).

This sequence belongs to the eIF-3 subunit H family. In terms of assembly, component of the eukaryotic translation initiation factor 3 (eIF-3) complex. The eIF-3 complex interacts with pix. Interacts with mxt.

The protein resides in the cytoplasm. In terms of biological role, component of the eukaryotic translation initiation factor 3 (eIF-3) complex, which is involved in protein synthesis of a specialized repertoire of mRNAs and, together with other initiation factors, stimulates binding of mRNA and methionyl-tRNAi to the 40S ribosome. The eIF-3 complex specifically targets and initiates translation of a subset of mRNAs involved in cell proliferation. In Drosophila erecta (Fruit fly), this protein is Eukaryotic translation initiation factor 3 subunit H.